The chain runs to 580 residues: NADH-quinone oxidoreductase subunit C/D (580 aa).

The interval 1-171 (MSLDQAIPEA…PPFVLTDRLF (171 aa)) is NADH dehydrogenase I subunit C. Positions 195 to 580 (ELMVLNFGPH…IDFVMSDVDR (386 aa)) are NADH dehydrogenase I subunit D.

It in the N-terminal section; belongs to the complex I 30 kDa subunit family. The protein in the C-terminal section; belongs to the complex I 49 kDa subunit family. NDH-1 is composed of 13 different subunits. Subunits NuoB, CD, E, F, and G constitute the peripheral sector of the complex.

The protein resides in the cell inner membrane. The enzyme catalyses a quinone + NADH + 5 H(+)(in) = a quinol + NAD(+) + 4 H(+)(out). In terms of biological role, NDH-1 shuttles electrons from NADH, via FMN and iron-sulfur (Fe-S) centers, to quinones in the respiratory chain. The immediate electron acceptor for the enzyme in this species is believed to be ubiquinone. Couples the redox reaction to proton translocation (for every two electrons transferred, four hydrogen ions are translocated across the cytoplasmic membrane), and thus conserves the redox energy in a proton gradient. This chain is NADH-quinone oxidoreductase subunit C/D, found in Cereibacter sphaeroides (strain KD131 / KCTC 12085) (Rhodobacter sphaeroides).